The following is a 129-amino-acid chain: Cytochrome c oxidase subunit 5B, mitochondrial (129 aa).

The transit peptide at 1–31 (MASRLLRGAGALAAQALRARGPSGAAAVRSM) directs the protein to the mitochondrion. 2 positions are modified to N6-acetyllysine: K68 and K86. Zn(2+) contacts are provided by C91, C93, C113, and C116. K121 is subject to N6-acetyllysine.

It belongs to the cytochrome c oxidase subunit 5B family. As to quaternary structure, component of the cytochrome c oxidase (complex IV, CIV), a multisubunit enzyme composed of 14 subunits. The complex is composed of a catalytic core of 3 subunits MT-CO1, MT-CO2 and MT-CO3, encoded in the mitochondrial DNA, and 11 supernumerary subunits COX4I, COX5A, COX5B, COX6A, COX6B, COX6C, COX7A, COX7B, COX7C, COX8 and NDUFA4, which are encoded in the nuclear genome. The complex exists as a monomer or a dimer and forms supercomplexes (SCs) in the inner mitochondrial membrane with NADH-ubiquinone oxidoreductase (complex I, CI) and ubiquinol-cytochrome c oxidoreductase (cytochrome b-c1 complex, complex III, CIII), resulting in different assemblies (supercomplex SCI(1)III(2)IV(1) and megacomplex MCI(2)III(2)IV(2)).

It is found in the mitochondrion inner membrane. It functions in the pathway energy metabolism; oxidative phosphorylation. Its function is as follows. Component of the cytochrome c oxidase, the last enzyme in the mitochondrial electron transport chain which drives oxidative phosphorylation. The respiratory chain contains 3 multisubunit complexes succinate dehydrogenase (complex II, CII), ubiquinol-cytochrome c oxidoreductase (cytochrome b-c1 complex, complex III, CIII) and cytochrome c oxidase (complex IV, CIV), that cooperate to transfer electrons derived from NADH and succinate to molecular oxygen, creating an electrochemical gradient over the inner membrane that drives transmembrane transport and the ATP synthase. Cytochrome c oxidase is the component of the respiratory chain that catalyzes the reduction of oxygen to water. Electrons originating from reduced cytochrome c in the intermembrane space (IMS) are transferred via the dinuclear copper A center (CU(A)) of subunit 2 and heme A of subunit 1 to the active site in subunit 1, a binuclear center (BNC) formed by heme A3 and copper B (CU(B)). The BNC reduces molecular oxygen to 2 water molecules using 4 electrons from cytochrome c in the IMS and 4 protons from the mitochondrial matrix. The protein is Cytochrome c oxidase subunit 5B, mitochondrial (COX5B) of Pongo abelii (Sumatran orangutan).